The sequence spans 177 residues: MSDLTTIARPYAKAAFDFAVEKQQLGHWSQMLAFTAEVAKNEQMHELLTSSGSANKLAEIFIAVCGEQLDGHGQNLIKVMAENGRLLAIPALYEHFAVLKQEHEKKVDVEVISATELSEQQRSEIGSKLEQRLERKVQLNCSVDETLLGGVIIRAGDLVIDNSARGRLKRLSDALQS.

It belongs to the ATPase delta chain family. F-type ATPases have 2 components, F(1) - the catalytic core - and F(0) - the membrane proton channel. F(1) has five subunits: alpha(3), beta(3), gamma(1), delta(1), epsilon(1). F(0) has three main subunits: a(1), b(2) and c(10-14). The alpha and beta chains form an alternating ring which encloses part of the gamma chain. F(1) is attached to F(0) by a central stalk formed by the gamma and epsilon chains, while a peripheral stalk is formed by the delta and b chains.

It localises to the cell inner membrane. Functionally, f(1)F(0) ATP synthase produces ATP from ADP in the presence of a proton or sodium gradient. F-type ATPases consist of two structural domains, F(1) containing the extramembraneous catalytic core and F(0) containing the membrane proton channel, linked together by a central stalk and a peripheral stalk. During catalysis, ATP synthesis in the catalytic domain of F(1) is coupled via a rotary mechanism of the central stalk subunits to proton translocation. In terms of biological role, this protein is part of the stalk that links CF(0) to CF(1). It either transmits conformational changes from CF(0) to CF(1) or is implicated in proton conduction. This chain is ATP synthase subunit delta, found in Vibrio cholerae serotype O1 (strain ATCC 39541 / Classical Ogawa 395 / O395).